The sequence spans 299 residues: tRNA dimethylallyltransferase (299 aa).

ATP is bound at residue 13–20; that stretch reads GPTASGKT. Residue 15–20 coordinates substrate; it reads TASGKT. The interval 38-41 is interaction with substrate tRNA; sequence DSRQ.

The protein belongs to the IPP transferase family. Monomer. The cofactor is Mg(2+).

The catalysed reaction is adenosine(37) in tRNA + dimethylallyl diphosphate = N(6)-dimethylallyladenosine(37) in tRNA + diphosphate. Functionally, catalyzes the transfer of a dimethylallyl group onto the adenine at position 37 in tRNAs that read codons beginning with uridine, leading to the formation of N6-(dimethylallyl)adenosine (i(6)A). This is tRNA dimethylallyltransferase from Parasynechococcus marenigrum (strain WH8102).